Reading from the N-terminus, the 307-residue chain is UDP-3-O-acyl-N-acetylglucosamine deacetylase (307 aa).

Zn(2+) is bound by residues His80, His239, and Asp243. His266 acts as the Proton donor in catalysis.

The protein belongs to the LpxC family. Zn(2+) serves as cofactor.

It catalyses the reaction a UDP-3-O-[(3R)-3-hydroxyacyl]-N-acetyl-alpha-D-glucosamine + H2O = a UDP-3-O-[(3R)-3-hydroxyacyl]-alpha-D-glucosamine + acetate. It functions in the pathway glycolipid biosynthesis; lipid IV(A) biosynthesis; lipid IV(A) from (3R)-3-hydroxytetradecanoyl-[acyl-carrier-protein] and UDP-N-acetyl-alpha-D-glucosamine: step 2/6. Catalyzes the hydrolysis of UDP-3-O-myristoyl-N-acetylglucosamine to form UDP-3-O-myristoylglucosamine and acetate, the committed step in lipid A biosynthesis. The polypeptide is UDP-3-O-acyl-N-acetylglucosamine deacetylase (Neisseria meningitidis serogroup C / serotype 2a (strain ATCC 700532 / DSM 15464 / FAM18)).